A 179-amino-acid chain; its full sequence is Large ribosomal subunit protein uL6 (179 aa).

Belongs to the universal ribosomal protein uL6 family. As to quaternary structure, part of the 50S ribosomal subunit.

Its function is as follows. This protein binds to the 23S rRNA, and is important in its secondary structure. It is located near the subunit interface in the base of the L7/L12 stalk, and near the tRNA binding site of the peptidyltransferase center. This is Large ribosomal subunit protein uL6 from Geobacter metallireducens (strain ATCC 53774 / DSM 7210 / GS-15).